A 407-amino-acid polypeptide reads, in one-letter code: 1-deoxy-D-xylulose 5-phosphate reductoisomerase (407 aa).

NADPH contacts are provided by Thr22, Gly23, Ser24, Ile25, Gly48, Asn51, and Asn128. Lys129 lines the 1-deoxy-D-xylulose 5-phosphate pocket. Residue Glu130 coordinates NADPH. Residue Asp152 coordinates Mn(2+). Ser153, Glu154, Ser178, and His201 together coordinate 1-deoxy-D-xylulose 5-phosphate. Glu154 is a binding site for Mn(2+). Gly207 is a binding site for NADPH. 1-deoxy-D-xylulose 5-phosphate is bound by residues Ser214, Asn219, Lys220, and Glu223. Glu223 contacts Mn(2+).

This sequence belongs to the DXR family. Mg(2+) serves as cofactor. Requires Mn(2+) as cofactor.

The enzyme catalyses 2-C-methyl-D-erythritol 4-phosphate + NADP(+) = 1-deoxy-D-xylulose 5-phosphate + NADPH + H(+). Its pathway is isoprenoid biosynthesis; isopentenyl diphosphate biosynthesis via DXP pathway; isopentenyl diphosphate from 1-deoxy-D-xylulose 5-phosphate: step 1/6. In terms of biological role, catalyzes the NADPH-dependent rearrangement and reduction of 1-deoxy-D-xylulose-5-phosphate (DXP) to 2-C-methyl-D-erythritol 4-phosphate (MEP). This is 1-deoxy-D-xylulose 5-phosphate reductoisomerase from Mycobacterium avium (strain 104).